Reading from the N-terminus, the 124-residue chain is Small ribosomal subunit protein uS12 (124 aa).

3-methylthioaspartic acid is present on aspartate 89.

Belongs to the universal ribosomal protein uS12 family. Part of the 30S ribosomal subunit. Contacts proteins S8 and S17. May interact with IF1 in the 30S initiation complex.

Functionally, with S4 and S5 plays an important role in translational accuracy. Its function is as follows. Interacts with and stabilizes bases of the 16S rRNA that are involved in tRNA selection in the A site and with the mRNA backbone. Located at the interface of the 30S and 50S subunits, it traverses the body of the 30S subunit contacting proteins on the other side and probably holding the rRNA structure together. The combined cluster of proteins S8, S12 and S17 appears to hold together the shoulder and platform of the 30S subunit. The chain is Small ribosomal subunit protein uS12 from Aeromonas hydrophila subsp. hydrophila (strain ATCC 7966 / DSM 30187 / BCRC 13018 / CCUG 14551 / JCM 1027 / KCTC 2358 / NCIMB 9240 / NCTC 8049).